The sequence spans 161 residues: Cytochrome b6-f complex subunit 4 (161 aa).

3 helical membrane passes run 37–57, 96–116, and 132–152; these read LLYIFPVVILGSIALCVGLAV, LLGVVLMGSIPLGLMLVPFIE, and TVFLFGTLFTLWLGIGATFPI.

This sequence belongs to the cytochrome b family. PetD subfamily. In terms of assembly, the 4 large subunits of the cytochrome b6-f complex are cytochrome b6, subunit IV (17 kDa polypeptide, PetD), cytochrome f and the Rieske protein, while the 4 small subunits are PetG, PetL, PetM and PetN. The complex functions as a dimer.

The protein localises to the cellular thylakoid membrane. Its function is as follows. Component of the cytochrome b6-f complex, which mediates electron transfer between photosystem II (PSII) and photosystem I (PSI), cyclic electron flow around PSI, and state transitions. This chain is Cytochrome b6-f complex subunit 4, found in Cyanothece sp. (strain PCC 7425 / ATCC 29141).